A 418-amino-acid chain; its full sequence is 3-phosphoshikimate 1-carboxyvinyltransferase (418 aa).

K26, S27, and R31 together coordinate 3-phosphoshikimate. K26 lines the phosphoenolpyruvate pocket. Positions 97 and 125 each coordinate phosphoenolpyruvate. S170, S171, Q172, D297, N320, and K324 together coordinate 3-phosphoshikimate. Position 172 (Q172) interacts with phosphoenolpyruvate. D297 serves as the catalytic Proton acceptor. Positions 328, 375, and 400 each coordinate phosphoenolpyruvate.

Belongs to the EPSP synthase family. Monomer.

It is found in the cytoplasm. It catalyses the reaction 3-phosphoshikimate + phosphoenolpyruvate = 5-O-(1-carboxyvinyl)-3-phosphoshikimate + phosphate. The protein operates within metabolic intermediate biosynthesis; chorismate biosynthesis; chorismate from D-erythrose 4-phosphate and phosphoenolpyruvate: step 6/7. In terms of biological role, catalyzes the transfer of the enolpyruvyl moiety of phosphoenolpyruvate (PEP) to the 5-hydroxyl of shikimate-3-phosphate (S3P) to produce enolpyruvyl shikimate-3-phosphate and inorganic phosphate. This Pseudomonas syringae pv. syringae (strain B728a) protein is 3-phosphoshikimate 1-carboxyvinyltransferase.